Consider the following 526-residue polypeptide: Ferrochelatase-2, chloroplastic (526 aa).

This sequence belongs to the ferrochelatase family.

It is found in the plastid. The protein localises to the chloroplast. The enzyme catalyses heme b + 2 H(+) = protoporphyrin IX + Fe(2+). The protein operates within porphyrin-containing compound metabolism; protoheme biosynthesis; protoheme from protoporphyrin-IX: step 1/1. In terms of biological role, catalyzes the ferrous insertion into protoporphyrin IX. This Oryza sativa subsp. japonica (Rice) protein is Ferrochelatase-2, chloroplastic.